The primary structure comprises 69 residues: Toxin Tma2 (69 aa).

The region spanning K2–N66 is the LCN-type CS-alpha/beta domain. Intrachain disulfides connect C14/C65, C18/C41, C27/C48, and C31/C50.

It belongs to the long (4 C-C) scorpion toxin superfamily. Sodium channel inhibitor family. As to expression, expressed by the venom gland.

The protein localises to the secreted. Its function is as follows. Inhibits voltage-gated sodium channels (Nav). This toxin shows insect lethality against crickets. This Tityus macrochirus (Scorpion) protein is Toxin Tma2.